Here is a 341-residue protein sequence, read N- to C-terminus: MTKPTILTGDRPTGKLHIGHYVGSLQNRVKMQNEDKYNMFVFLADQQALTDHAKEPELIRQSVGDVALDYLAAGLDPEKSTIFIQSQIPELAELSMYYMNLVSLARLERNPTVKTEIAQKAFGESIPAGFLVYPVSQAADITAFKATHVPVGNDQKPMIEQTREIVRSFNNAYHTDVLVEPEGIYPENEAAGRLPGLDGNAKMSKSLGNGIFLADDMDTLKKKVMSMYTDPDHIKVEDPGKIEGNMVFHYLDVFGKAEDAEQISEMKAQYQAGGLGDVKTKRFLLDVLDRELSPIRERRIEFAQNMDYVYDMLKAGSLKAQAVASQTLDEVKSAMGINYFK.

Residues 11–13 (RPT) and 19–20 (GH) contribute to the ATP site. The short motif at 12–20 (PTGKLHIGH) is the 'HIGH' region element. D140 contacts L-tryptophan. Residues 152-154 (GND), L194, and 202-206 (KMSKS) each bind ATP. The 'KMSKS' region motif lies at 202 to 206 (KMSKS).

Belongs to the class-I aminoacyl-tRNA synthetase family. As to quaternary structure, homodimer.

The protein localises to the cytoplasm. It catalyses the reaction tRNA(Trp) + L-tryptophan + ATP = L-tryptophyl-tRNA(Trp) + AMP + diphosphate + H(+). In terms of biological role, catalyzes the attachment of tryptophan to tRNA(Trp). This is Tryptophan--tRNA ligase from Lactococcus lactis subsp. lactis (strain IL1403) (Streptococcus lactis).